The primary structure comprises 126 residues: Protein VraC (126 aa).

The sequence is that of Protein VraC from Staphylococcus haemolyticus (strain JCSC1435).